The primary structure comprises 147 residues: 3-dehydroquinate dehydratase 2 (147 aa).

The active-site Proton acceptor is the Tyr-23. Residues Asn-74, His-80, and Asp-87 each coordinate substrate. The active-site Proton donor is His-100. Substrate is bound by residues 101–102 and Arg-111; that span reads IS.

This sequence belongs to the type-II 3-dehydroquinase family. In terms of assembly, homododecamer.

The catalysed reaction is 3-dehydroquinate = 3-dehydroshikimate + H2O. It participates in metabolic intermediate biosynthesis; chorismate biosynthesis; chorismate from D-erythrose 4-phosphate and phosphoenolpyruvate: step 3/7. Functionally, catalyzes a trans-dehydration via an enolate intermediate. The protein is 3-dehydroquinate dehydratase 2 (aroQ2) of Agrobacterium fabrum (strain C58 / ATCC 33970) (Agrobacterium tumefaciens (strain C58)).